The following is a 301-amino-acid chain: N-acetylmuramic acid 6-phosphate etherase (301 aa).

An SIS domain is found at 59 to 222 (TSEALMHGGR…STSVMVKLGK (164 aa)). Glutamate 87 (proton donor) is an active-site residue. Glutamate 118 is an active-site residue.

It belongs to the GCKR-like family. MurNAc-6-P etherase subfamily. Homodimer.

The catalysed reaction is N-acetyl-D-muramate 6-phosphate + H2O = N-acetyl-D-glucosamine 6-phosphate + (R)-lactate. Its pathway is amino-sugar metabolism; N-acetylmuramate degradation. Functionally, specifically catalyzes the cleavage of the D-lactyl ether substituent of MurNAc 6-phosphate, producing GlcNAc 6-phosphate and D-lactate. The polypeptide is N-acetylmuramic acid 6-phosphate etherase (Picosynechococcus sp. (strain ATCC 27264 / PCC 7002 / PR-6) (Agmenellum quadruplicatum)).